Consider the following 558-residue polypeptide: Nuclear speckle splicing regulatory protein 1 (558 aa).

The tract at residues 21 to 54 (PVLQKPSVFGNDSDDDDETSVSESLQREAAKKQA) is disordered. Phosphoserine occurs at positions 27 and 33. Residues 104–170 (IHNLLKAVEI…REKRAAALEA (67 aa)) adopt a coiled-coil conformation. Positions 106 to 170 (NLLKAVEIRK…REKRAAALEA (65 aa)) are necessary for alternative splicing activity. Glycyl lysine isopeptide (Lys-Gly) (interchain with G-Cter in SUMO2) cross-links involve residues K199 and K210. A compositionally biased stretch (basic and acidic residues) spans 204–215 (EARSGIKEEKSR). The disordered stretch occupies residues 204–534 (EARSGIKEEK…KRNNEETVMS (331 aa)). Positions 216-226 (GFSNEVSSKNR) are enriched in polar residues. 3 positions are modified to phosphoserine: S248, S254, and S255. Positions 250-280 (FDAKSSADDEIEETRVNCRREKVIETPENDF) are enriched in basic and acidic residues. T275 carries the post-translational modification Phosphothreonine. K281 is covalently cross-linked (Glycyl lysine isopeptide (Lys-Gly) (interchain with G-Cter in SUMO2)). Residues 299–310 (STRHHTKGSRTS) show a composition bias toward basic residues. Composition is skewed to basic and acidic residues over residues 311 to 442 (RGHE…KREV), 449 to 487 (RNQD…RNQE), and 501 to 517 (RLTE…ERPP). Positions 379–427 (KREKDREKYSQREQERDRQQNDQNRPSEKGEKEEKSKAKEEHMKVRKER) form a coiled coil. The residue at position 457 (S457) is a Phosphoserine.

Belongs to the NSRP1 family. In terms of assembly, interacts (via C-terminus) with SRSF1. Interacts (via C-terminus) with SRSF2. Expressed in dendritic cells, T-cells, B-cells and natural killer cells. Expressed in secondary lymphoid organs such as spleen and mesenteric, axillary and brachial lymph nodes.

Its subcellular location is the nucleus. The protein localises to the nucleus speckle. In terms of biological role, RNA-binding protein that mediates pre-mRNA alternative splicing regulation. In Homo sapiens (Human), this protein is Nuclear speckle splicing regulatory protein 1 (NSRP1).